The following is a 200-amino-acid chain: Neutrophil gelatinase-associated lipocalin (200 aa).

An N-terminal signal peptide occupies residues 1 to 20; the sequence is MALSVMCLGLALLGVLQSQA. Glutamine 21 bears the Pyrrolidone carboxylic acid mark. An a carboxymycobactin-binding site is contributed by 72–74; it reads YST. 2 N-linked (GlcNAc...) asparagine glycosylation sites follow: asparagine 81 and asparagine 85. An intrachain disulfide couples cysteine 98 to cysteine 197. Residue tyrosine 128 coordinates enterobactin. A carboxymycobactin is bound by residues lysine 147, lysine 156, and tyrosine 160. Lysine 156 is an enterobactin binding site.

It belongs to the calycin superfamily. Lipocalin family. As to quaternary structure, monomer. Homodimer; disulfide-linked. Heterodimer; disulfide-linked with MMP9. N-glycosylated. In terms of tissue distribution, expressed in the cortical tubules of the kidney (at protein level). Also expressed in the medullary tubules of the kidney. Detected in lung, spleen, uterus, vagina and epididymis.

It is found in the secreted. The protein localises to the cytoplasmic granule lumen. Its subcellular location is the cytoplasmic vesicle lumen. In terms of biological role, iron-trafficking protein involved in multiple processes such as apoptosis, innate immunity and renal development. Binds iron through association with 2,3-dihydroxybenzoic acid (2,3-DHBA), a siderophore that shares structural similarities with bacterial enterobactin, and delivers or removes iron from the cell, depending on the context. Iron-bound form (holo-24p3) is internalized following binding to the SLC22A17 (24p3R) receptor, leading to release of iron and subsequent increase of intracellular iron concentration. In contrast, association of the iron-free form (apo-24p3) with the SLC22A17 (24p3R) receptor is followed by association with an intracellular siderophore, iron chelation and iron transfer to the extracellular medium, thereby reducing intracellular iron concentration. Involved in apoptosis due to interleukin-3 (IL3) deprivation: iron-loaded form increases intracellular iron concentration without promoting apoptosis, while iron-free form decreases intracellular iron levels, inducing expression of the proapoptotic protein BCL2L11/BIM, resulting in apoptosis. Involved in innate immunity; limits bacterial proliferation by sequestering iron bound to microbial siderophores, such as enterobactin. Can also bind siderophores from M.tuberculosis. The polypeptide is Neutrophil gelatinase-associated lipocalin (Lcn2) (Mus musculus (Mouse)).